The chain runs to 300 residues: 2-keto-3-deoxy-L-fuconate dehydrogenase (300 aa).

NAD(+) contacts are provided by residues 63-90 and Asp-112; that span reads LITAAGAGIGRESALACARAGAHVIATD. Arg-198 contacts substrate. Tyr-201 acts as the Proton acceptor in catalysis. NAD(+)-binding positions include Lys-205 and 234-238; that span reads IKTPS. Residues Arg-242 and Arg-260 each contribute to the substrate site.

It belongs to the short-chain dehydrogenases/reductases (SDR) family.

Its function is as follows. Plays a role in the catabolism of L-fucose. Catalyzes the NAD(+)-dependent oxidation of 2-keo-3-deoxy-L-fuconate to 2,4-diketo-3-deoxy-L-fuconate. The sequence is that of 2-keto-3-deoxy-L-fuconate dehydrogenase from Xanthomonas campestris pv. campestris (strain ATCC 33913 / DSM 3586 / NCPPB 528 / LMG 568 / P 25).